A 76-amino-acid polypeptide reads, in one-letter code: UPF0248 protein MmarC6_0667 (76 aa).

The protein belongs to the UPF0248 family.

In Methanococcus maripaludis (strain C6 / ATCC BAA-1332), this protein is UPF0248 protein MmarC6_0667.